The following is a 445-amino-acid chain: Glutamate-1-semialdehyde 2,1-aminomutase (445 aa).

An N6-(pyridoxal phosphate)lysine modification is found at lysine 263.

It belongs to the class-III pyridoxal-phosphate-dependent aminotransferase family. HemL subfamily. Requires pyridoxal 5'-phosphate as cofactor.

It localises to the cytoplasm. It catalyses the reaction (S)-4-amino-5-oxopentanoate = 5-aminolevulinate. The protein operates within porphyrin-containing compound metabolism; protoporphyrin-IX biosynthesis; 5-aminolevulinate from L-glutamyl-tRNA(Glu): step 2/2. The sequence is that of Glutamate-1-semialdehyde 2,1-aminomutase from Halorubrum lacusprofundi (strain ATCC 49239 / DSM 5036 / JCM 8891 / ACAM 34).